The primary structure comprises 424 residues: Probable serine/threonine-protein kinase PBL12 (424 aa).

Positions 88 to 368 constitute a Protein kinase domain; the sequence is FSRSNMLGEG…CEVVKVLESI (281 aa). Residues 94–102 and Lys-123 contribute to the ATP site; that span reads LGEGGFGPV. Asp-218 (proton acceptor) is an active-site residue.

Belongs to the protein kinase superfamily. Ser/Thr protein kinase family. In terms of tissue distribution, expressed specifically in roots.

Its subcellular location is the cell membrane. The catalysed reaction is L-seryl-[protein] + ATP = O-phospho-L-seryl-[protein] + ADP + H(+). The enzyme catalyses L-threonyl-[protein] + ATP = O-phospho-L-threonyl-[protein] + ADP + H(+). Its function is as follows. May play a role in the signal transduction pathway of osmotic stress. May be involved in plant defense signaling. In Arabidopsis thaliana (Mouse-ear cress), this protein is Probable serine/threonine-protein kinase PBL12.